The following is a 112-amino-acid chain: MMKFVVFLACLFVAAHSFAVEGEEEYFEAEVPELERAKALPPGSVCDGNESDCKCYGKWHKCRCPWKWHFTGEGPCTCEKGMKHTCITKLHCPNKAEWGLDWRSEESERSPC.

A signal peptide spans 1–19 (MMKFVVFLACLFVAAHSFA). Residues 20–36 (VEGEEEYFEAEVPELER) constitute a propeptide that is removed on maturation. A propeptide spans 103–109 (RSEESER) (glu-rich).

The protein belongs to the neurotoxin 04 (omega-agtx) family. 01 (type I omega-agtx) subfamily. As to quaternary structure, heterodimer of two subunits, a major chain and a minor chain, linked by a disulfide bond. Proteolytically processed to yield the major and the minor chains. Expressed by the venom gland.

The protein resides in the secreted. Its function is as follows. Omega-agatoxins are antagonists of voltage-gated calcium channels. They block insect neuromuscular transmission presynaptically. This toxin is a blocker of L-type calcium channels (Cav/CACNA1). In Agelenopsis aperta (North American funnel-web spider), this protein is Omega-agatoxin-1A.